Here is a 205-residue protein sequence, read N- to C-terminus: Small ribosomal subunit protein uS4 (205 aa).

The interval 18–46 (NIWGRPKSPVNRREYGPGQHGQRRKGKLS) is disordered. Residues 94 to 157 (RRLDTVVYRA…KQLAFVLEAS (64 aa)) enclose the S4 RNA-binding domain.

Belongs to the universal ribosomal protein uS4 family. As to quaternary structure, part of the 30S ribosomal subunit. Contacts protein S5. The interaction surface between S4 and S5 is involved in control of translational fidelity.

Its function is as follows. One of the primary rRNA binding proteins, it binds directly to 16S rRNA where it nucleates assembly of the body of the 30S subunit. Functionally, with S5 and S12 plays an important role in translational accuracy. This is Small ribosomal subunit protein uS4 from Rhodopseudomonas palustris (strain HaA2).